The following is a 152-amino-acid chain: ESAT-6 secretion machinery protein EssA (152 aa).

At 1–114 (MLMNSVIALT…PYIQNKQEKK (114 aa)) the chain is on the cytoplasmic side. The chain crosses the membrane as a helical span at residues 115–135 (IFPYILMSVGAFLTLGFVIFS). The Extracellular segment spans residues 136-152 (IHKGRRTKNESARKSNI).

It belongs to the EssA family.

The protein localises to the cell membrane. In terms of biological role, component of the ESAT-6 secretion system (Ess). Required for the secretion of EsxA. This Staphylococcus aureus (strain MRSA252) protein is ESAT-6 secretion machinery protein EssA.